Reading from the N-terminus, the 1215-residue chain is Chromosome segregation protein sudA (1215 aa).

32–39 is a binding site for ATP; that stretch reads GRNGSGKS. Residues 177–522 are a coiled coil; the sequence is KIMHETNSKR…LSQMMDHNTS (346 aa). The disordered stretch occupies residues 313–332; it reads SDNQAAAQESKARHDESLKA. One can recognise an SMC hinge domain in the interval 538–650; sequence EGVYGTLAEL…PNLQVASQYA (113 aa). Residues 654 to 676 are disordered; that stretch reads GVNATTPEGDRSDKRGALTGGFH. The stretch at 684-1091 forms a coiled coil; that stretch reads DAVKNLAKWR…EEAKHSVENY (408 aa).

The protein belongs to the SMC family. SMC3 subfamily.

It localises to the nucleus. Functionally, involved in chromosome segregation in mitosis. The sequence is that of Chromosome segregation protein sudA (sudA) from Emericella nidulans (strain FGSC A4 / ATCC 38163 / CBS 112.46 / NRRL 194 / M139) (Aspergillus nidulans).